A 266-amino-acid polypeptide reads, in one-letter code: Hydroxyethylthiazole kinase (266 aa).

Met-45 contributes to the substrate binding site. ATP contacts are provided by Arg-120 and Thr-165. Ala-192 is a substrate binding site.

The protein belongs to the Thz kinase family. Mg(2+) is required as a cofactor.

The catalysed reaction is 5-(2-hydroxyethyl)-4-methylthiazole + ATP = 4-methyl-5-(2-phosphooxyethyl)-thiazole + ADP + H(+). Its pathway is cofactor biosynthesis; thiamine diphosphate biosynthesis; 4-methyl-5-(2-phosphoethyl)-thiazole from 5-(2-hydroxyethyl)-4-methylthiazole: step 1/1. In terms of biological role, catalyzes the phosphorylation of the hydroxyl group of 4-methyl-5-beta-hydroxyethylthiazole (THZ). In Psychrobacter sp. (strain PRwf-1), this protein is Hydroxyethylthiazole kinase.